A 209-amino-acid chain; its full sequence is Immunoglobulin lambda-like polypeptide 1 (209 aa).

Residues 1–30 (MKLRVGQTLGTIPRQCEVLLLLLLLGLVDG) form the signal peptide. The tract at residues 93-104 (VFGGGTQLTILG) is j region. Residues 105–209 (QPKSDPLVTL…EKSVSPAECS (105 aa)) are c region. Positions 110 to 204 (PLVTLFLPSL…EGNTVEKSVS (95 aa)) constitute an Ig-like C1-type domain. The cysteines at positions 131 and 190 are disulfide-linked.

Interacts with VPREB1A. Interacts with SYNV1/HRD1 (via N-terminus); this interaction leads to increased IGLL1 ubiquitination and degradation in pre-B cells, possibly through a lysosomal, not proteasomal, pathway. Selectively expressed in pre-B lymphocytes.

The protein localises to the endoplasmic reticulum. It is found in the secreted. Critical for B-cell development. The protein is Immunoglobulin lambda-like polypeptide 1 (Igll1) of Mus musculus (Mouse).